Here is a 365-residue protein sequence, read N- to C-terminus: Probable G-protein coupled receptor 142 (365 aa).

The Extracellular portion of the chain corresponds to 1–66; it reads MHLNSNPNSY…WPESPERSPC (66 aa). An N-linked (GlcNAc...) asparagine glycan is attached at Asn44. Residues 67 to 87 form a helical membrane-spanning segment; it reads VAGIIPVIYYSVLLSLGLPVA. Over 88–102 the chain is Cytoplasmic; it reads LARLAARTRKPSYHY. Residues 103–123 traverse the membrane as a helical segment; it reads LLALTASDIVTQVIIVFVGFL. Topologically, residues 124–140 are extracellular; sequence LQGAVLARQVPQAVVRT. Residues 141 to 161 form a helical membrane-spanning segment; the sequence is ANILEFAANHASVWIAVLFTV. The Cytoplasmic portion of the chain corresponds to 162 to 185; it reads DRYNALCRPLRHRATSSPGRTHRA. The chain crosses the membrane as a helical span at residues 186-206; that stretch reads IAAVIGVTLLTGIPFYWWLDV. The Extracellular segment spans residues 207 to 224; that stretch reads WRDADPPSTMDKLLKWAH. A helical transmembrane segment spans residues 225-245; that stretch reads CLIVYFIPCNVFLVTNSAIIL. The Cytoplasmic segment spans residues 246-264; that stretch reads RLRKRGQRGLRPLVSKSTA. A helical transmembrane segment spans residues 265–285; the sequence is ILLGVTSLFALLWAPRIIVML. Residues 286-304 lie on the Extracellular side of the membrane; the sequence is YHLYVAPVHRDWRVHLALD. A helical transmembrane segment spans residues 305–325; it reads IANMLAMLNTEVNFGLYCFIS. At 326-365 the chain is on the cytoplasmic side; it reads KTFRATVRQVICDVHMACALKSQPKQTVVELMLKSVGTEL.

This sequence belongs to the G-protein coupled receptor 1 family.

The protein localises to the cell membrane. Orphan receptor. This chain is Probable G-protein coupled receptor 142 (Gpr142), found in Mus musculus (Mouse).